Reading from the N-terminus, the 201-residue chain is MIGRLRGTLAEKQPPHLILDVNGVGYEVEVPMTTLYRLPSVGEPVTLHTHLVVREDAHLLYGFAEKRERELFRELIRLNGVGPKLALALMSGLEVDELVRCVQAQDTSTLVKIPGVGKKTAERLLVELKDRFKAWENMPTIAPLVMEPRASATVSSAEADAVSALIALGFKPQEASRAVAAVPGEDLSSEEMIRQALKGMV.

The segment at 1–64 (MIGRLRGTLA…EDAHLLYGFA (64 aa)) is domain I. The segment at 65–143 (EKRERELFRE…AWENMPTIAP (79 aa)) is domain II. The flexible linker stretch occupies residues 144–152 (LVMEPRASA). The interval 153 to 201 (TVSSAEADAVSALIALGFKPQEASRAVAAVPGEDLSSEEMIRQALKGMV) is domain III.

This sequence belongs to the RuvA family. Homotetramer. Forms an RuvA(8)-RuvB(12)-Holliday junction (HJ) complex. HJ DNA is sandwiched between 2 RuvA tetramers; dsDNA enters through RuvA and exits via RuvB. An RuvB hexamer assembles on each DNA strand where it exits the tetramer. Each RuvB hexamer is contacted by two RuvA subunits (via domain III) on 2 adjacent RuvB subunits; this complex drives branch migration. In the full resolvosome a probable DNA-RuvA(4)-RuvB(12)-RuvC(2) complex forms which resolves the HJ.

The protein resides in the cytoplasm. The RuvA-RuvB-RuvC complex processes Holliday junction (HJ) DNA during genetic recombination and DNA repair, while the RuvA-RuvB complex plays an important role in the rescue of blocked DNA replication forks via replication fork reversal (RFR). RuvA specifically binds to HJ cruciform DNA, conferring on it an open structure. The RuvB hexamer acts as an ATP-dependent pump, pulling dsDNA into and through the RuvAB complex. HJ branch migration allows RuvC to scan DNA until it finds its consensus sequence, where it cleaves and resolves the cruciform DNA. This is Holliday junction branch migration complex subunit RuvA from Pseudomonas aeruginosa (strain LESB58).